Reading from the N-terminus, the 270-residue chain is Acyl-[acyl-carrier-protein]--UDP-N-acetylglucosamine O-acyltransferase (270 aa).

This sequence belongs to the transferase hexapeptide repeat family. LpxA subfamily. Homotrimer.

It localises to the cytoplasm. The enzyme catalyses a (3R)-hydroxyacyl-[ACP] + UDP-N-acetyl-alpha-D-glucosamine = a UDP-3-O-[(3R)-3-hydroxyacyl]-N-acetyl-alpha-D-glucosamine + holo-[ACP]. The protein operates within glycolipid biosynthesis; lipid IV(A) biosynthesis; lipid IV(A) from (3R)-3-hydroxytetradecanoyl-[acyl-carrier-protein] and UDP-N-acetyl-alpha-D-glucosamine: step 1/6. Involved in the biosynthesis of lipid A, a phosphorylated glycolipid that anchors the lipopolysaccharide to the outer membrane of the cell. This Sinorhizobium fredii (strain NBRC 101917 / NGR234) protein is Acyl-[acyl-carrier-protein]--UDP-N-acetylglucosamine O-acyltransferase.